We begin with the raw amino-acid sequence, 89 residues long: Large ribosomal subunit protein bL27 (89 aa).

A disordered region spans residues 1–21 (MAHKKAGGSSRNGRDSQSKRL).

The protein belongs to the bacterial ribosomal protein bL27 family.

The sequence is that of Large ribosomal subunit protein bL27 from Rhizobium rhizogenes (strain K84 / ATCC BAA-868) (Agrobacterium radiobacter).